The sequence spans 1056 residues: Pleckstrin homology domain-containing family M member 1 (1056 aa).

Residues 41-183 (TSEDGDANTM…LSFELSYKSA (143 aa)) enclose the RUN domain. Disordered regions lie at residues 215 to 245 (QRKE…RRNQ), 277 to 303 (GSKS…EDSD), and 360 to 422 (PAQA…QAHD). The residue at position 219 (serine 219) is a Phosphoserine. Polar residues predominate over residues 389 to 404 (PVESTSGQQPSSTVSE). 2 positions are modified to phosphoserine: serine 432 and serine 435. Residues 451–483 (SREQPLESASDHPIASYRGTPGSRPGLHRHFSQ) are disordered. Residue serine 490 is modified to Phosphoserine. In terms of domain architecture, PH 1 spans 534–625 (GLMKLGTVER…WLDRVREALQ (92 aa)). Positions 632 to 638 (EDEWVNV) match the LIR motif. Residues 654-1056 (CLSPSDLLSE…RKYQEQNIFA (403 aa)) are interaction with RAB7A. The PH 2 domain maps to 683-777 (DAIKESLLYL…WRDLVRKVLA (95 aa)). A Phorbol-ester/DAG-type zinc finger spans residues 986–1040 (QHVYHCDLCTQRGFICQICQHHDIIFPFEFDTTVRCAECKTVFHQSCQAVVKKGC).

In terms of assembly, interacts (via N- and C-terminus) with RAB7A (GTP-bound form). Simultaneously interacts with RAB7A and ARL8B; bringing about clustering and fusion of late endosomes and lysosomes. Interacts (via RUN domain) with ARL8B (GTP-bound form); the interaction is required for PLEKHM1 localization to lysosomes and for ARL8B function in delivery and degradation of endocytic and autophagic cargo in lysosomes. PLEKHM1 and PLEKHM2 compete for interaction with ARL8B. Interacts with ARL8A; the interaction is weaker than with ARL8B. Interacts with VPS41, VPS11, VPS18, VPS33A and VPS39; indicative for an association with the HOPS complex; the interactions with, at least, VPS41, VPS11, VPS18 and VPS33A require ARL8B. Interacts with GABARAP, GABARAPL, GABARAPL2, MAP1LC3A, MAP1LC3B and MAP1LC3C. Interacts with PAFAH1B. Interacts (via N- and C-terminus) with NDEL1. Interacts (via C-terminus) with MAP3K7. Interacts (via N- and C-terminus) with FAM98A. Interacts (via C-terminus) with DEF8; this interaction is weak but increased in a RAB7A-dependent manner. In colon carcinoma and breast carcinoma cells, it interacts with sialyl-lex-positive protein. As to quaternary structure, (Microbial infection) Interacts with Salmonella typhimurium sifA. In terms of tissue distribution, expressed in placenta, liver, prostate, thymus, spleen, ovary, colon, colon carcinoma and peripheral blood lymphocytes (PBL). Weakly expressed in brain, lung, kidney, and testis. No expression in heart, skeletal muscle, pancreas and small intestine. Predominantly expressed in the breast carcinoma cell line MCF-7.

The protein resides in the autolysosome membrane. It is found in the endosome membrane. Its subcellular location is the late endosome membrane. It localises to the lysosome membrane. Its function is as follows. Acts as a multivalent adapter protein that regulates Rab7-dependent and HOPS complex-dependent fusion events in the endolysosomal system and couples autophagic and the endocytic trafficking pathways. Acts as a dual effector of RAB7A and ARL8B that simultaneously binds these GTPases, bringing about clustering and fusion of late endosomes and lysosomes. Required for late stages of endolysosomal maturation, facilitating both endocytosis-mediated degradation of growth factor receptors and autophagosome clearance. Interaction with Arl8b is a crucial factor in the terminal maturation of autophagosomes and to mediate autophagosome-lysosome fusion. Positively regulates lysosome peripheral distribution and ruffled border formation in osteoclasts. May be involved in negative regulation of endocytic transport from early endosome to late endosome/lysosome implicating its association with Rab7. May have a role in sialyl-lex-mediated transduction of apoptotic signals. Involved in bone resorption. (Microbial infection) In case of infection contributes to Salmonella typhimurium pathogenesis by supporting the integrity of the Salmonella-containing vacuole (SCV) probably in concert with the HOPS complex and Rab7. In Homo sapiens (Human), this protein is Pleckstrin homology domain-containing family M member 1.